A 283-amino-acid chain; its full sequence is Acetylglutamate kinase (283 aa).

Residues 63 to 64, R85, and N178 contribute to the substrate site; that span reads GG.

It belongs to the acetylglutamate kinase family. ArgB subfamily.

Its subcellular location is the cytoplasm. It catalyses the reaction N-acetyl-L-glutamate + ATP = N-acetyl-L-glutamyl 5-phosphate + ADP. Its pathway is amino-acid biosynthesis; L-arginine biosynthesis; N(2)-acetyl-L-ornithine from L-glutamate: step 2/4. Its function is as follows. Catalyzes the ATP-dependent phosphorylation of N-acetyl-L-glutamate. The protein is Acetylglutamate kinase of Prochlorococcus marinus (strain MIT 9215).